Consider the following 310-residue polypeptide: ADP-L-glycero-D-manno-heptose-6-epimerase (310 aa).

Residues 10–11 (FI), 31–32 (DN), Lys-38, Lys-53, 75–79 (EGACS), and Asn-92 each bind NADP(+). Residue Tyr-140 is the Proton acceptor of the active site. Lys-144 provides a ligand contact to NADP(+). Position 169 (Asn-169) interacts with substrate. NADP(+)-binding residues include Val-170 and Lys-178. The active-site Proton acceptor is Lys-178. Residues Ser-180, His-187, 201 to 204 (FEGS), and Arg-209 contribute to the substrate site. Lys-267 carries the post-translational modification N6-acetyllysine. Tyr-272 is a binding site for substrate.

It belongs to the NAD(P)-dependent epimerase/dehydratase family. HldD subfamily. In terms of assembly, homopentamer. NADP(+) is required as a cofactor.

The catalysed reaction is ADP-D-glycero-beta-D-manno-heptose = ADP-L-glycero-beta-D-manno-heptose. Its pathway is nucleotide-sugar biosynthesis; ADP-L-glycero-beta-D-manno-heptose biosynthesis; ADP-L-glycero-beta-D-manno-heptose from D-glycero-beta-D-manno-heptose 7-phosphate: step 4/4. Catalyzes the interconversion between ADP-D-glycero-beta-D-manno-heptose and ADP-L-glycero-beta-D-manno-heptose via an epimerization at carbon 6 of the heptose. The sequence is that of ADP-L-glycero-D-manno-heptose-6-epimerase from Shigella boydii serotype 18 (strain CDC 3083-94 / BS512).